The chain runs to 94 residues: Histone-like DNA-binding protein (94 aa).

Belongs to the bacterial histone-like protein family.

This chain is Histone-like DNA-binding protein, found in Rickettsia bellii (strain RML369-C).